Reading from the N-terminus, the 396-residue chain is S-adenosylmethionine synthase (396 aa).

Residue His-15 participates in ATP binding. Residue Asp-17 coordinates Mg(2+). Glu-43 contributes to the K(+) binding site. L-methionine contacts are provided by Glu-56 and Gln-99. The interval 99 to 109 (QSPDIALGVNR) is flexible loop. Residues 175 to 177 (DGK), 241 to 242 (RF), Asp-250, 256 to 257 (RK), Ala-273, and Lys-277 contribute to the ATP site. An L-methionine-binding site is contributed by Asp-250. Lys-281 contacts L-methionine.

It belongs to the AdoMet synthase family. Homotetramer; dimer of dimers. It depends on Mg(2+) as a cofactor. K(+) serves as cofactor.

The protein localises to the cytoplasm. It catalyses the reaction L-methionine + ATP + H2O = S-adenosyl-L-methionine + phosphate + diphosphate. It participates in amino-acid biosynthesis; S-adenosyl-L-methionine biosynthesis; S-adenosyl-L-methionine from L-methionine: step 1/1. In terms of biological role, catalyzes the formation of S-adenosylmethionine (AdoMet) from methionine and ATP. The overall synthetic reaction is composed of two sequential steps, AdoMet formation and the subsequent tripolyphosphate hydrolysis which occurs prior to release of AdoMet from the enzyme. The sequence is that of S-adenosylmethionine synthase from Carboxydothermus hydrogenoformans (strain ATCC BAA-161 / DSM 6008 / Z-2901).